Reading from the N-terminus, the 201-residue chain is 3-isopropylmalate dehydratase small subunit (201 aa).

The protein belongs to the LeuD family. LeuD type 1 subfamily. In terms of assembly, heterodimer of LeuC and LeuD.

The enzyme catalyses (2R,3S)-3-isopropylmalate = (2S)-2-isopropylmalate. Its pathway is amino-acid biosynthesis; L-leucine biosynthesis; L-leucine from 3-methyl-2-oxobutanoate: step 2/4. Its function is as follows. Catalyzes the isomerization between 2-isopropylmalate and 3-isopropylmalate, via the formation of 2-isopropylmaleate. This Afipia carboxidovorans (strain ATCC 49405 / DSM 1227 / KCTC 32145 / OM5) (Oligotropha carboxidovorans) protein is 3-isopropylmalate dehydratase small subunit.